Consider the following 622-residue polypeptide: Kelch-like protein 14 (622 aa).

The BTB domain maps to 33–145 (CDVTLTAQGQ…LYTANVTLSL (113 aa)). The segment at 73 to 108 (ALGPGAQDGLGGAPPKEPPPPPQEEPGTPSSSPEDK) is disordered. Residues 87–96 (PKEPPPPPQE) show a composition bias toward pro residues. Kelch repeat units lie at residues 317 to 366 (MLLL…EVEN), 367 to 418 (FLFV…RLDK), 419 to 465 (NLYV…VHNG), 467 to 512 (IYIS…VMND), 514 to 564 (LYAI…VLDD), and 566 to 614 (IYLV…TVIL).

The protein resides in the cytoplasm. The protein localises to the cytosol. Its subcellular location is the endoplasmic reticulum membrane. This is Kelch-like protein 14 (KLHL14) from Gallus gallus (Chicken).